The chain runs to 3416 residues: Genome polyprotein (3416 aa).

The interval methionine 1 to proline 34 is disordered. Residues methionine 1 to threonine 99 are Cytoplasmic-facing. The propeptide at arginine 97 to serine 117 is ER anchor for the capsid protein C, removed in mature form by serine protease NS3. The chain crosses the membrane as a helical span at residues threonine 100–isoleucine 120. The Extracellular portion of the chain corresponds to arginine 121–tryptophan 243. N-linked (GlcNAc...) asparagine; by host glycosylation occurs at asparagine 145. A helical membrane pass occupies residues lysine 244 to aspartate 261. Position 262 (serine 262) is a topological domain, cytoplasmic. The chain crosses the membrane as a helical span at residues leucine 263–alanine 281. Residues threonine 282 to threonine 728 lie on the Extracellular side of the membrane. 6 cysteine pairs are disulfide-bonded: cysteine 284/cysteine 311, cysteine 341/cysteine 397, cysteine 341/cysteine 402, cysteine 355/cysteine 386, cysteine 373/cysteine 397, and cysteine 373/cysteine 402. The interval aspartate 379–glycine 392 is fusion peptide. N-linked (GlcNAc...) asparagine; by host glycosylation is present at asparagine 435. Disulfide bonds link cysteine 467-cysteine 571 and cysteine 588-cysteine 619. The helical transmembrane segment at isoleucine 729–glycine 749 threads the bilayer. The Cytoplasmic segment spans residues leucine 750–threonine 756. A helical transmembrane segment spans residues leucine 757–alanine 777. Residues aspartate 778–alanine 1134 are Extracellular-facing. Cystine bridges form between cysteine 781–cysteine 792, cysteine 832–cysteine 922, cysteine 957–cysteine 1002, cysteine 1059–cysteine 1108, cysteine 1070–cysteine 1092, and cysteine 1091–cysteine 1095. Asparagine 862, asparagine 985, and asparagine 1001 each carry an N-linked (GlcNAc...) asparagine; by host glycan. A helical transmembrane segment spans residues methionine 1135–isoleucine 1155. Residues arginine 1156 to glycine 1162 lie on the Cytoplasmic side of the membrane. The chain crosses the membrane as a helical span at residues threonine 1163–isoleucine 1183. Topologically, residues glutamate 1184–tyrosine 1189 are lumenal. A helical membrane pass occupies residues valine 1190–leucine 1210. Residues leucine 1211 to glutamate 1235 are Cytoplasmic-facing. A helical membrane pass occupies residues alanine 1236–serine 1256. Residues asparagine 1257–aspartate 1295 lie on the Lumenal side of the membrane. The helical transmembrane segment at methionine 1296 to tryptophan 1316 threads the bilayer. The Cytoplasmic portion of the chain corresponds to serine 1317 to serine 1361. The helical transmembrane segment at phenylalanine 1362–methionine 1379 threads the bilayer. Residues valine 1380 to serine 1384 lie on the Lumenal side of the membrane. The helical transmembrane segment at glutamine 1385–threonine 1405 threads the bilayer. The Cytoplasmic portion of the chain corresponds to arginine 1406–tryptophan 1458. Positions alanine 1412–glutamate 1451 are interacts with and activates NS3 protease. Positions leucine 1459–isoleucine 1479 form an intramembrane region, helical. Residues tryptophan 1480–alanine 2162 are Cytoplasmic-facing. Residues serine 1492–proline 1671 enclose the Peptidase S7 domain. Catalysis depends on charge relay system; for serine protease NS3 activity residues histidine 1545, aspartate 1569, and serine 1629. A Helicase ATP-binding domain is found at threonine 1677 to glutamate 1833. Methionine 1690–threonine 1697 serves as a coordination point for ATP. Residues aspartate 1781–histidine 1784 carry the DEAH box motif. In terms of domain architecture, Helicase C-terminal spans glycine 1844 to tyrosine 2002. An N6-acetyllysine; by host modification is found at lysine 1885. The helical transmembrane segment at phenylalanine 2163 to phenylalanine 2183 threads the bilayer. The Lumenal segment spans residues valine 2184–arginine 2191. The helical intramembrane region spans methionine 2192–valine 2211. Aspartate 2212 is a topological domain (lumenal). Residues tyrosine 2213–glutamate 2233 form a helical membrane-spanning segment. The Cytoplasmic segment spans residues proline 2234–alanine 2246. Residues tyrosine 2247–leucine 2267 traverse the membrane as a helical segment. At aspartate 2268–serine 2301 the chain is on the lumenal side. An intramembrane region (helical) is located at residues tryptophan 2302–threonine 2322. The Lumenal segment spans residues lysine 2323–glycine 2345. Residues threonine 2346 to alanine 2366 constitute an intramembrane region (helical). Residues threonine 2367–proline 2368 are Lumenal-facing. A helical membrane pass occupies residues leucine 2369 to leucine 2389. Over glutamate 2390–arginine 2432 the chain is Cytoplasmic. A helical transmembrane segment spans residues methionine 2433–alanine 2453. Topologically, residues serine 2454 to threonine 2476 are lumenal. Residues leucine 2477–leucine 2497 form a helical membrane-spanning segment. At leucine 2498 to isoleucine 3416 the chain is on the cytoplasmic side. In terms of domain architecture, mRNA cap 0-1 NS5-type MT spans glycine 2514–cysteine 2778. Residue serine 2569 coordinates S-adenosyl-L-methionine. Serine 2569 carries the post-translational modification Phosphoserine. Lysine 2574 (for 2'-O-MTase activity) is an active-site residue. S-adenosyl-L-methionine is bound by residues glycine 2599, tryptophan 2600, threonine 2617, isoleucine 2618, aspartate 2644, and valine 2645. The active-site For 2'-O-MTase activity is the aspartate 2659. Residue isoleucine 2660 coordinates S-adenosyl-L-methionine. Residues lysine 2696 and glutamate 2732 each act as for 2'-O-MTase activity in the active site. Positions glutamate 2732–serine 2736 are interaction with host SCRIB. Tyrosine 2734 is an S-adenosyl-L-methionine binding site. 4 residues coordinate Zn(2+): glutamate 2952, histidine 2956, cysteine 2961, and cysteine 2964. The 150-residue stretch at glycine 3042–alanine 3191 folds into the RdRp catalytic domain. Residues histidine 3226, cysteine 3242, and cysteine 3361 each contribute to the Zn(2+) site.

It in the N-terminal section; belongs to the class I-like SAM-binding methyltransferase superfamily. mRNA cap 0-1 NS5-type methyltransferase family. Homodimer. Interacts (via N-terminus) with host EXOC1 (via C-terminus); this interaction results in EXOC1 degradation through the proteasome degradation pathway. As to quaternary structure, forms heterodimers with envelope protein E in the endoplasmic reticulum and Golgi. In terms of assembly, homodimer; in the endoplasmic reticulum and Golgi. Interacts with protein prM. Interacts with non-structural protein 1. Homodimer; Homohexamer when secreted. Interacts with envelope protein E. As to quaternary structure, interacts (via N-terminus) with serine protease NS3. In terms of assembly, forms a heterodimer with serine protease NS3. May form homooligomers. Forms a heterodimer with NS2B. Interacts with NS4B. Interacts with unphosphorylated RNA-directed RNA polymerase NS5; this interaction stimulates RNA-directed RNA polymerase NS5 guanylyltransferase activity. As to quaternary structure, interacts with serine protease NS3. In terms of assembly, homodimer. Interacts with host STAT2; this interaction inhibits the phosphorylation of the latter, and, when all viral proteins are present (polyprotein), targets STAT2 for degradation. Interacts with serine protease NS3. Post-translationally, specific enzymatic cleavages in vivo yield mature proteins. Cleavages in the lumen of endoplasmic reticulum are performed by host signal peptidase, whereas cleavages in the cytoplasmic side are performed by serine protease NS3. Signal cleavage at the 2K-4B site requires a prior NS3 protease-mediated cleavage at the 4A-2K site. Cleaved in post-Golgi vesicles by a host furin, releasing the mature small envelope protein M, and peptide pr. This cleavage is incomplete as up to 30% of viral particles still carry uncleaved prM. In terms of processing, N-glycosylated. Post-translationally, N-glycosylated. The excreted form is glycosylated and this is required for efficient secretion of the protein from infected cells. Acetylated by host KAT5. Acetylation modulates NS3 RNA-binding and unwinding activities and plays an important positive role for viral replication. In terms of processing, phosphorylated on serines residues. This phosphorylation may trigger NS5 nuclear localization.

The protein localises to the virion. It is found in the host nucleus. Its subcellular location is the host cytoplasm. The protein resides in the host perinuclear region. It localises to the secreted. The protein localises to the virion membrane. It is found in the host endoplasmic reticulum membrane. The enzyme catalyses Selective hydrolysis of -Xaa-Xaa-|-Yaa- bonds in which each of the Xaa can be either Arg or Lys and Yaa can be either Ser or Ala.. It carries out the reaction RNA(n) + a ribonucleoside 5'-triphosphate = RNA(n+1) + diphosphate. It catalyses the reaction a ribonucleoside 5'-triphosphate + H2O = a ribonucleoside 5'-diphosphate + phosphate + H(+). The catalysed reaction is ATP + H2O = ADP + phosphate + H(+). The enzyme catalyses a 5'-end (5'-triphosphoguanosine)-ribonucleoside in mRNA + S-adenosyl-L-methionine = a 5'-end (N(7)-methyl 5'-triphosphoguanosine)-ribonucleoside in mRNA + S-adenosyl-L-homocysteine. It carries out the reaction a 5'-end (N(7)-methyl 5'-triphosphoguanosine)-ribonucleoside in mRNA + S-adenosyl-L-methionine = a 5'-end (N(7)-methyl 5'-triphosphoguanosine)-(2'-O-methyl-ribonucleoside) in mRNA + S-adenosyl-L-homocysteine + H(+). Functionally, plays a role in virus budding by binding to the cell membrane and gathering the viral RNA into a nucleocapsid that forms the core of a mature virus particle. During virus entry, may induce genome penetration into the host cytoplasm after hemifusion induced by the surface proteins. Can migrate to the cell nucleus where it modulates host functions. Inhibits RNA silencing by interfering with host Dicer. Its function is as follows. Prevents premature fusion activity of envelope proteins in trans-Golgi by binding to envelope protein E at pH6.0. After virion release in extracellular space, gets dissociated from E dimers. In terms of biological role, acts as a chaperone for envelope protein E during intracellular virion assembly by masking and inactivating envelope protein E fusion peptide. prM is the only viral peptide matured by host furin in the trans-Golgi network probably to avoid catastrophic activation of the viral fusion activity in acidic Golgi compartment prior to virion release. prM-E cleavage is inefficient, and many virions are only partially matured. These uncleaved prM would play a role in immune evasion. Functionally, may play a role in virus budding. Exerts cytotoxic effects by activating a mitochondrial apoptotic pathway through M ectodomain. May display a viroporin activity. Binds to host cell surface receptor and mediates fusion between viral and cellular membranes. Envelope protein is synthesized in the endoplasmic reticulum in the form of heterodimer with protein prM. They play a role in virion budding in the ER, and the newly formed immature particle is covered with 60 spikes composed of heterodimer between precursor prM and envelope protein E. The virion is transported to the Golgi apparatus where the low pH causes dissociation of PrM-E heterodimers and formation of E homodimers. prM-E cleavage is inefficient, and many virions are only partially matured. These uncleaved prM would play a role in immune evasion. Its function is as follows. Involved in immune evasion, pathogenesis and viral replication. Once cleaved off the polyprotein, is targeted to three destinations: the viral replication cycle, the plasma membrane and the extracellular compartment. Essential for viral replication. Required for formation of the replication complex and recruitment of other non-structural proteins to the ER-derived membrane structures. Excreted as a hexameric lipoparticle that plays a role against host immune response. Antagonizing the complement function. Binds to the host macrophages and dendritic cells. Inhibits signal transduction originating from Toll-like receptor 3 (TLR3). In terms of biological role, component of the viral RNA replication complex that functions in virion assembly and antagonizes the host immune response. Functionally, required cofactor for the serine protease function of NS3. May have membrane-destabilizing activity and form viroporins. Displays three enzymatic activities: serine protease, NTPase and RNA helicase. NS3 serine protease, in association with NS2B, performs its autocleavage and cleaves the polyprotein at dibasic sites in the cytoplasm: C-prM, NS2A-NS2B, NS2B-NS3, NS3-NS4A, NS4A-2K and NS4B-NS5. NS3 RNA helicase binds RNA and unwinds dsRNA in the 3' to 5' direction. Its function is as follows. Regulates the ATPase activity of the NS3 helicase activity. NS4A allows NS3 helicase to conserve energy during unwinding. In terms of biological role, functions as a signal peptide for NS4B and is required for the interferon antagonism activity of the latter. Functionally, induces the formation of ER-derived membrane vesicles where the viral replication takes place. Inhibits interferon (IFN)-induced host STAT1 phosphorylation and nuclear translocation, thereby preventing the establishment of cellular antiviral state by blocking the IFN-alpha/beta pathway. Inhibits STAT2 translocation in the nucleus after IFN-alpha treatment. Replicates the viral (+) and (-) RNA genome, and performs the capping of genomes in the cytoplasm. NS5 methylates viral RNA cap at guanine N-7 and ribose 2'-O positions. Besides its role in RNA genome replication, also prevents the establishment of cellular antiviral state by blocking the interferon-alpha/beta (IFN-alpha/beta) signaling pathway. Inhibits host TYK2 and STAT2 phosphorylation, thereby preventing activation of JAK-STAT signaling pathway. This is Genome polyprotein from Homo sapiens (Human).